The primary structure comprises 108 residues: Protein YcgL (108 aa).

The region spanning 12–96 (MFCVIYRSSK…SPEDLLKQHL (85 aa)) is the YcgL domain.

The polypeptide is Protein YcgL (Shigella dysenteriae serotype 1 (strain Sd197)).